Here is a 617-residue protein sequence, read N- to C-terminus: LEAF RUST 10 DISEASE-RESISTANCE LOCUS RECEPTOR-LIKE PROTEIN KINASE-like 2.4 (617 aa).

Positions 1–26 (MYYLPSSCLVLFLFFSLFYHLPCASS) are cleaved as a signal peptide. Residues 27-243 (KQTLGWCESQ…LPTRLSSEAK (217 aa)) are Extracellular-facing. 5 N-linked (GlcNAc...) asparagine glycosylation sites follow: asparagine 41, asparagine 69, asparagine 86, asparagine 112, and asparagine 184. Residues 244–264 (IATIAGVSLLPFLVLTLVVHI) traverse the membrane as a helical segment. Residues 265–617 (IRKQKTSNDK…SEENSISSEI (353 aa)) lie on the Cytoplasmic side of the membrane. The 288-residue stretch at 307 to 594 (NSFAEVVGRG…ALEVPPRPVL (288 aa)) folds into the Protein kinase domain. Residues 313-321 (VGRGGFGIV) and lysine 335 each bind ATP. Tyrosine 380 bears the Phosphotyrosine mark. Aspartate 431 acts as the Proton acceptor in catalysis. A phosphothreonine mark is found at threonine 468 and threonine 471.

This sequence belongs to the protein kinase superfamily. Ser/Thr protein kinase family.

It localises to the membrane. It catalyses the reaction L-seryl-[protein] + ATP = O-phospho-L-seryl-[protein] + ADP + H(+). The enzyme catalyses L-threonyl-[protein] + ATP = O-phospho-L-threonyl-[protein] + ADP + H(+). The chain is LEAF RUST 10 DISEASE-RESISTANCE LOCUS RECEPTOR-LIKE PROTEIN KINASE-like 2.4 from Arabidopsis thaliana (Mouse-ear cress).